The chain runs to 110 residues: Large ribosomal subunit protein uL22 (110 aa).

Belongs to the universal ribosomal protein uL22 family. Part of the 50S ribosomal subunit.

Its function is as follows. This protein binds specifically to 23S rRNA; its binding is stimulated by other ribosomal proteins, e.g. L4, L17, and L20. It is important during the early stages of 50S assembly. It makes multiple contacts with different domains of the 23S rRNA in the assembled 50S subunit and ribosome. The globular domain of the protein is located near the polypeptide exit tunnel on the outside of the subunit, while an extended beta-hairpin is found that lines the wall of the exit tunnel in the center of the 70S ribosome. The polypeptide is Large ribosomal subunit protein uL22 (Acinetobacter baylyi (strain ATCC 33305 / BD413 / ADP1)).